A 306-amino-acid polypeptide reads, in one-letter code: Ornithine carbamoyltransferase (306 aa).

Residues 46–49 (STRT), Gln-73, Arg-97, and 124–127 (HPTQ) each bind carbamoyl phosphate. L-ornithine-binding positions include Asn-156, Asp-220, and 224 to 225 (SM). Residues 260-261 (CL) and Arg-288 contribute to the carbamoyl phosphate site.

Belongs to the aspartate/ornithine carbamoyltransferase superfamily. OTCase family.

The protein resides in the cytoplasm. It catalyses the reaction carbamoyl phosphate + L-ornithine = L-citrulline + phosphate + H(+). It participates in amino-acid degradation; L-arginine degradation via ADI pathway; carbamoyl phosphate from L-arginine: step 2/2. Reversibly catalyzes the transfer of the carbamoyl group from carbamoyl phosphate (CP) to the N(epsilon) atom of ornithine (ORN) to produce L-citrulline. This chain is Ornithine carbamoyltransferase, found in Campylobacter jejuni subsp. doylei (strain ATCC BAA-1458 / RM4099 / 269.97).